The primary structure comprises 330 residues: NADH-quinone oxidoreductase subunit H (330 aa).

8 consecutive transmembrane segments (helical) span residues L5 to L25, W78 to I98, I120 to G140, A155 to M175, S191 to A211, F243 to L263, L271 to V291, and W308 to W328.

Belongs to the complex I subunit 1 family. In terms of assembly, NDH-1 is composed of 14 different subunits. Subunits NuoA, H, J, K, L, M, N constitute the membrane sector of the complex.

It is found in the cell inner membrane. The enzyme catalyses a quinone + NADH + 5 H(+)(in) = a quinol + NAD(+) + 4 H(+)(out). In terms of biological role, NDH-1 shuttles electrons from NADH, via FMN and iron-sulfur (Fe-S) centers, to quinones in the respiratory chain. The immediate electron acceptor for the enzyme in this species is believed to be ubiquinone. Couples the redox reaction to proton translocation (for every two electrons transferred, four hydrogen ions are translocated across the cytoplasmic membrane), and thus conserves the redox energy in a proton gradient. This subunit may bind ubiquinone. This is NADH-quinone oxidoreductase subunit H from Syntrophotalea carbinolica (strain DSM 2380 / NBRC 103641 / GraBd1) (Pelobacter carbinolicus).